We begin with the raw amino-acid sequence, 270 residues long: Fluoride-specific ion channel FluC 2 (270 aa).

The next 4 helical transmembrane spans lie at 4-24, 35-55, 67-87, and 96-116; these read IIIL…FIML, LDIL…TALY, IIGT…YGSV, and AFLI…VAVL. Gly-74 and Ser-77 together coordinate Na(+).

Belongs to the fluoride channel Fluc/FEX (TC 1.A.43) family.

The protein resides in the cell inner membrane. The enzyme catalyses fluoride(in) = fluoride(out). Its activity is regulated as follows. Na(+) is not transported, but it plays an essential structural role and its presence is essential for fluoride channel function. Fluoride-specific ion channel. Important for reducing fluoride concentration in the cell, thus reducing its toxicity. In Brucella melitensis biotype 1 (strain ATCC 23456 / CCUG 17765 / NCTC 10094 / 16M), this protein is Fluoride-specific ion channel FluC 2.